We begin with the raw amino-acid sequence, 488 residues long: Fumarate hydratase (488 aa).

(S)-malate is bound by residues Ser-105, Ser-147, Asn-148, Thr-194, and His-195. Residue His-195 is the Proton donor/acceptor of the active site. Residue Ser-340 is part of the active site. Residues Ser-341, Lys-346, and Asn-348 each coordinate (S)-malate.

This sequence belongs to the class-II fumarase/aspartase family. Fumarase subfamily. As to quaternary structure, homotetramer.

It is found in the cytoplasm. It localises to the cytosol. It carries out the reaction (S)-malate = fumarate + H2O. Catalyzes the reversible stereospecific interconversion of fumarate to L-malate. Fumarate metabolism in the cytosol plays a role during urea cycle and arginine metabolism; fumarate being a by-product of the urea cycle and amino-acid catabolism. This Schistosoma mansoni (Blood fluke) protein is Fumarate hydratase.